Consider the following 248-residue polypeptide: Granzyme C (248 aa).

The signal sequence occupies residues 1–18 (MPPVLILLTLLLPLRAGA). A propeptide spanning residues 19-20 (EE) is cleaved from the precursor. Residues 21-246 (IIGGNEISPH…FVSWIKKTMK (226 aa)) enclose the Peptidase S1 domain. Cys-50 and Cys-66 form a disulfide bridge. Active-site charge relay system residues include His-65 and Asp-109. 2 disulfides stabilise this stretch: Cys-143–Cys-210 and Cys-174–Cys-189. The active-site Charge relay system is Ser-204.

The protein belongs to the peptidase S1 family. Granzyme subfamily.

The protein resides in the cytolytic granule. This enzyme is probably necessary for target cell lysis in cell-mediated immune responses. This is Granzyme C (Gzmc) from Mus musculus (Mouse).